Here is an 84-residue protein sequence, read N- to C-terminus: ATP synthase subunit c (84 aa).

The next 2 membrane-spanning stretches (helical) occupy residues 9-29 (IIGA…GFAI) and 54-74 (IVAG…LLFI).

It belongs to the ATPase C chain family. F-type ATPases have 2 components, F(1) - the catalytic core - and F(0) - the membrane proton channel. F(1) has five subunits: alpha(3), beta(3), gamma(1), delta(1), epsilon(1). F(0) has three main subunits: a(1), b(2) and c(10-14). The alpha and beta chains form an alternating ring which encloses part of the gamma chain. F(1) is attached to F(0) by a central stalk formed by the gamma and epsilon chains, while a peripheral stalk is formed by the delta and b chains.

It localises to the cell inner membrane. In terms of biological role, f(1)F(0) ATP synthase produces ATP from ADP in the presence of a proton or sodium gradient. F-type ATPases consist of two structural domains, F(1) containing the extramembraneous catalytic core and F(0) containing the membrane proton channel, linked together by a central stalk and a peripheral stalk. During catalysis, ATP synthesis in the catalytic domain of F(1) is coupled via a rotary mechanism of the central stalk subunits to proton translocation. Functionally, key component of the F(0) channel; it plays a direct role in translocation across the membrane. A homomeric c-ring of between 10-14 subunits forms the central stalk rotor element with the F(1) delta and epsilon subunits. The polypeptide is ATP synthase subunit c (Haemophilus influenzae (strain ATCC 51907 / DSM 11121 / KW20 / Rd)).